Consider the following 2128-residue polypeptide: Spectrin beta chain, erythrocytic (2128 aa).

Polar residues predominate over residues 1-15 (MTSATEFENVGNQPP). The interval 1-30 (MTSATEFENVGNQPPFSRINARWDAPDDEL) is disordered. The segment at 2-275 (TSATEFENVG…IITYVVAFYH (274 aa)) is actin-binding. S36 carries the phosphoserine modification. Calponin-homology (CH) domains follow at residues 54 to 158 (VVQK…LRFQ) and 173 to 278 (RSAK…HYFS). T104 is modified (phosphothreonine). 17 Spectrin repeats span residues 303-411 (MIEK…LALR), 416-517 (RQEF…QRLE), 521-627 (ALQK…QLEQ), 630-733 (RLWK…DLQD), 736-838 (NFFQ…KLQE), 845-942 (VFGE…REAV), 950-1050 (NYCV…LSLG), 1054-1157 (KLQA…NTLT), 1162-1250 (FQEF…RHKK), 1267-1368 (ELQN…EQLS), 1381-1455 (ADLN…FLDL), 1473-1574 (LQIS…RLRD), 1576-1680 (HEAQ…RLEN), 1682-1784 (YHLF…MQLL), 1789-1890 (DLHR…RAQL), 1897-1997 (FRFF…DRLH), and 2004-2064 (QFSR…KPTT). Phosphoserine is present on S1289. The residue at position 2034 (S2034) is a Phosphoserine. The segment at 2062–2108 (PTTLELKERQTPERPTEEPGPQEEEGETAGEAPQVHHAATERTSPVS) is disordered. T2064, T2072, and T2101 each carry phosphothreonine. The segment covering 2066-2078 (ELKERQTPERPTE) has biased composition (basic and acidic residues). A phosphoserine mark is found at S2105, S2108, S2114, S2116, and S2119.

This sequence belongs to the spectrin family. In terms of assembly, composed of nonhomologous chains, alpha and beta, which aggregate to form dimers, tetramers, and higher polymers. Interacts with BCAM.

The protein resides in the cytoplasm. The protein localises to the cytoskeleton. It localises to the cell cortex. Spectrin is the major constituent of the cytoskeletal network underlying the erythrocyte plasma membrane. It associates with band 4.1 and actin to form the cytoskeletal superstructure of the erythrocyte plasma membrane. The sequence is that of Spectrin beta chain, erythrocytic (Sptb) from Mus musculus (Mouse).